The chain runs to 193 residues: uncharacterized protein (193 aa).

This is an uncharacterized protein from Acidianus convivator (ATV).